Here is a 310-residue protein sequence, read N- to C-terminus: Thioredoxin reductase (310 aa).

35-42 (ERGMPGGQ) lines the FAD pocket. The cysteines at positions 134 and 137 are disulfide-linked. Residue 277-286 (DVRDKGLRQI) coordinates FAD.

This sequence belongs to the class-II pyridine nucleotide-disulfide oxidoreductase family. As to quaternary structure, homodimer. Requires FAD as cofactor.

The protein localises to the cytoplasm. The catalysed reaction is [thioredoxin]-dithiol + NADP(+) = [thioredoxin]-disulfide + NADPH + H(+). In Staphylococcus epidermidis (strain ATCC 35984 / DSM 28319 / BCRC 17069 / CCUG 31568 / BM 3577 / RP62A), this protein is Thioredoxin reductase (trxB).